The sequence spans 883 residues: Phosphoenolpyruvate carboxylase (883 aa).

Catalysis depends on residues His-138 and Lys-546.

The protein belongs to the PEPCase type 1 family. The cofactor is Mg(2+).

It carries out the reaction oxaloacetate + phosphate = phosphoenolpyruvate + hydrogencarbonate. Its function is as follows. Forms oxaloacetate, a four-carbon dicarboxylic acid source for the tricarboxylic acid cycle. In Escherichia fergusonii (strain ATCC 35469 / DSM 13698 / CCUG 18766 / IAM 14443 / JCM 21226 / LMG 7866 / NBRC 102419 / NCTC 12128 / CDC 0568-73), this protein is Phosphoenolpyruvate carboxylase.